Here is a 318-residue protein sequence, read N- to C-terminus: N-succinylornithine carbamoyltransferase (318 aa).

Carbamoyl phosphate is bound by residues 47–50 (SLRT), W75, and R110. Residue E142 participates in N(2)-succinyl-L-ornithine binding. 147-150 (HPLQ) lines the carbamoyl phosphate pocket. Residues H176 and K236 each contribute to the N(2)-succinyl-L-ornithine site. 274–275 (CL) contributes to the carbamoyl phosphate binding site. R278 lines the N(2)-succinyl-L-ornithine pocket. R302 is a binding site for carbamoyl phosphate.

This sequence belongs to the aspartate/ornithine carbamoyltransferase superfamily. SOTCase family. In terms of assembly, homotrimer.

It catalyses the reaction N(2)-succinyl-L-ornithine + carbamoyl phosphate = N(2)-succinyl-L-citrulline + phosphate + H(+). It functions in the pathway amino-acid biosynthesis; L-arginine biosynthesis. Functionally, catalyzes the transfer of the carbamoyl group from carbamoyl phosphate to the delta-amino group of N(2)-succinyl-L-ornithine to produce N(2)-succinyl-L-citrulline. Is essential for arginine biosynthesis. Has no activity with either L-ornithine or L-aspartate as substrate. Also has no detectable AOTCase activity, being unable to convert N(2)-acetyl-L-ornithine to N(2)-acetyl-L-citrulline. This is N-succinylornithine carbamoyltransferase from Bacteroides fragilis (strain 638R).